Here is a 261-residue protein sequence, read N- to C-terminus: Small ribosomal subunit protein uS2 (261 aa).

The protein belongs to the universal ribosomal protein uS2 family.

The protein is Small ribosomal subunit protein uS2 of Enterococcus faecalis (strain ATCC 700802 / V583).